The chain runs to 112 residues: MEAVEETDTNSKLADTIMENLMKVYTIEEIMQTVRKNKDKSVYLCVKRSKPESPKIYVDSNGNHCYRCDETLLVPIPKKFVVLEPDKLYFEMTLRANIMLALNGAEEKELHH.

This is an uncharacterized protein from Archaeoglobus fulgidus (strain ATCC 49558 / DSM 4304 / JCM 9628 / NBRC 100126 / VC-16).